The primary structure comprises 146 residues: uncharacterized protein (146 aa).

It to E.coli YmfS.

This is an uncharacterized protein from Escherichia coli (strain K12).